A 281-amino-acid polypeptide reads, in one-letter code: MMPKRKFQAPTERQLAVRRDNIPDALLTRCPVCHEDCYTQDLGEFKVCPHCDYGFRLPAWQRVQQLTASFEERDADLSAPVSFDDPAYLEKLQRAKAASHLNESVLTGIGTLATYQFGLGVMETKFMMGSLGAATGEKITRLFETCTTQKLPVVMVTASGGARMQEGARALMQMAKVSTAVANHRKAGLLYITILTDPTTGGVTASFAMQGDIMLSEPRALIGFAGRRVIEQTIQQTPPADFQRAETLLANGWLDQIVPRPALRKTLQRLLTITQGGHQDV.

Positions 26–281 constitute a CoA carboxyltransferase N-terminal domain; sequence LLTRCPVCHE…TITQGGHQDV (256 aa). Residues cysteine 30, cysteine 33, cysteine 48, and cysteine 51 each contribute to the Zn(2+) site. The C4-type zinc-finger motif lies at 30–51; that stretch reads CPVCHEDCYTQDLGEFKVCPHC.

The protein belongs to the AccD/PCCB family. In terms of assembly, acetyl-CoA carboxylase is a heterohexamer composed of biotin carboxyl carrier protein (AccB), biotin carboxylase (AccC) and two subunits each of ACCase subunit alpha (AccA) and ACCase subunit beta (AccD). Requires Zn(2+) as cofactor.

It is found in the cytoplasm. The catalysed reaction is N(6)-carboxybiotinyl-L-lysyl-[protein] + acetyl-CoA = N(6)-biotinyl-L-lysyl-[protein] + malonyl-CoA. Its pathway is lipid metabolism; malonyl-CoA biosynthesis; malonyl-CoA from acetyl-CoA: step 1/1. In terms of biological role, component of the acetyl coenzyme A carboxylase (ACC) complex. Biotin carboxylase (BC) catalyzes the carboxylation of biotin on its carrier protein (BCCP) and then the CO(2) group is transferred by the transcarboxylase to acetyl-CoA to form malonyl-CoA. The polypeptide is Acetyl-coenzyme A carboxylase carboxyl transferase subunit beta 2 (Lactiplantibacillus plantarum (strain JDM1) (Lactobacillus plantarum)).